Consider the following 154-residue polypeptide: Protein X (154 aa).

The segment at 68 to 117 is mitochondrial targeting sequence; sequence PCALRFTSARYMETAMNTSHHLPRQLYKWTLGLFVMSTTGVEKYFKDCVF.

Belongs to the orthohepadnavirus protein X family. In terms of assembly, may form homodimer. May interact with host CEBPA, CFLAR, CREB1, DDB1, E4F1, HBXIP, HSPD1/HSP60, NFKBIA, POLR2E and SMAD4. Interacts with host SMC5-SMC6 complex and induces its degradation. Interacts with host TRPC4AP; leading to prevent ubiquitination of TRPC4AP. Interacts with host PLSCR1; this interaction promotes ubiquitination and degradation of HBx and impairs HBx-mediated cell proliferation. Post-translationally, a fraction may be phosphorylated in insect cells and HepG2 cells, a human hepatoblastoma cell line. Phosphorylated in vitro by host protein kinase C or mitogen-activated protein kinase. N-acetylated in insect cells.

The protein resides in the host cytoplasm. It localises to the host nucleus. It is found in the host mitochondrion. Its function is as follows. Multifunctional protein that plays a role in silencing host antiviral defenses and promoting viral transcription. Does not seem to be essential for HBV infection. May be directly involved in development of cirrhosis and liver cancer (hepatocellular carcinoma). Most of cytosolic activities involve modulation of cytosolic calcium. The effect on apoptosis is controversial depending on the cell types in which the studies have been conducted. May induce apoptosis by localizing in mitochondria and causing loss of mitochondrial membrane potential. May also modulate apoptosis by binding host CFLAR, a key regulator of the death-inducing signaling complex (DISC). Promotes viral transcription by using the host E3 ubiquitin ligase DDB1 to target the SMC5-SMC6 complex to proteasomal degradation. This host complex would otherwise bind to viral episomal DNA, and prevents its transcription. Moderately stimulates transcription of many different viral and cellular transcription elements. Promoters and enhancers stimulated by HBx contain DNA binding sites for NF-kappa-B, AP-1, AP-2, c-EBP, ATF/CREB, or the calcium-activated factor NF-AT. This Hepatitis B virus genotype G (isolate IG29227/2000) (HBV-G) protein is Protein X.